The chain runs to 1070 residues: MPKRDDIKTILVIGSGPIVIGQAAEFDYAGTQACLSLKEEGYRVVLVNSNPATIMTDAEMADKVYIEPITLDFVSRIIRKERPDAILPTLGGQTGLNMAMELSAAGILDECNVEVLGTDLTAIKKAEDREAFRDLMNELGEPVPESDIIHNLDEAYTFVERIGYPVIVRPAYTLGGSGGGICHNEQELIETVTSGLKLSPVTQCLLEKSIAGFKEVEYEVMRDANNNAMVVCNMENIDPVGIHTGDSIVVAPSQTLSDREYQLLRDVSLKIIRALEIEGGCNVQLALDPDSYNYYVIEVNPRVSRSSALASKATGYPIAKLAAKIAVGLTLDEVRNPVTGTTYAHFEPTLDYVVAKIPRFAFDKFEQADRRLGTQMKATGEVMAIGRSWEEALLKAVRSLEIGADHLLLEEAENADAETLERKICFPEDDRLFFLAAALRRGQTIEQLHAKTKIDLFFLYKLSKTIELENRLKENPQNEEILAEAKRAGFSDAFIATCWNIDEQAIYDLRKAQNLFPVYKMVDTCAAEFESTTPYFYSTYEDENESIRSSKESVIVLGSGPIRIGQGVEFDYATVHSVWAIQQAGYEAIIINNNPETVSTDFSISDKLYFEPLTLEDVMHVIEIEQPLGVVVQFGGQTAINLADGLAKRGVKILGTSLEDTDRAENRDAFEKALEILQIPQPAGKTATSVEAAIKVATDIGYPVLVRPSYVLGGRAMEIVESEEALKHYMTNAVKVNPKHPVLVDRYVSGQEVEVDAISDGENVLIPGIMEHIERAGVHSGDSIAVYPAQRLSEQVKNTIVDYTTRLATGLNIIGMLNIQYVVDGEEVFVIEVNPRSSRTAPFLSKITEIPMANVATRVILGENLIDLGYTPGLAPEKQEIFVKVPVFSFAKLRSVDTSLGPEMKSTGEVMGKDVTLEKALYKGFVASGTTMHDYGTVLLTVADRDKEEAVELAKRFNRIGFTIMATKGTASTLEEAEIPVSQVKKIGENQETLIDYIRNGQVTLVVNTLTTGKRPERDGFQIRRESVENGIPVCTSLDTAEAILRVLESRSFELESMNASEVKQPKARV.

The tract at residues 1–401 is carboxyphosphate synthetic domain; it reads MPKRDDIKTI…ALLKAVRSLE (401 aa). R129, R169, G175, G176, K208, I210, E215, G241, I242, H243, Q284, and E298 together coordinate ATP. One can recognise an ATP-grasp 1 domain in the interval 133–327; the sequence is RDLMNELGEP…IAKLAAKIAV (195 aa). Residues Q284, E298, and N300 each contribute to the Mg(2+) site. Mn(2+)-binding residues include Q284, E298, and N300. Residues 402-546 form an oligomerization domain region; the sequence is IGADHLLLEE…YSTYEDENES (145 aa). The tract at residues 547-929 is carbamoyl phosphate synthetic domain; sequence IRSSKESVIV…ALYKGFVASG (383 aa). In terms of domain architecture, ATP-grasp 2 spans 671–861; sequence EKALEILQIP…MANVATRVIL (191 aa). Residues R707, R746, V748, E752, G777, V778, H779, S780, Q820, and E832 each coordinate ATP. Residues Q820, E832, and N834 each coordinate Mg(2+). Residues Q820, E832, and N834 each contribute to the Mn(2+) site. The MGS-like domain maps to 930 to 1070; sequence TTMHDYGTVL…SEVKQPKARV (141 aa). An allosteric domain region spans residues 930 to 1070; it reads TTMHDYGTVL…SEVKQPKARV (141 aa).

The protein belongs to the CarB family. In terms of assembly, composed of two chains; the small (or glutamine) chain promotes the hydrolysis of glutamine to ammonia, which is used by the large (or ammonia) chain to synthesize carbamoyl phosphate. Tetramer of heterodimers (alpha,beta)4. Requires Mg(2+) as cofactor. The cofactor is Mn(2+).

The enzyme catalyses hydrogencarbonate + L-glutamine + 2 ATP + H2O = carbamoyl phosphate + L-glutamate + 2 ADP + phosphate + 2 H(+). It catalyses the reaction hydrogencarbonate + NH4(+) + 2 ATP = carbamoyl phosphate + 2 ADP + phosphate + 2 H(+). It functions in the pathway amino-acid biosynthesis; L-arginine biosynthesis; carbamoyl phosphate from bicarbonate: step 1/1. The protein operates within pyrimidine metabolism; UMP biosynthesis via de novo pathway; (S)-dihydroorotate from bicarbonate: step 1/3. Functionally, large subunit of the glutamine-dependent carbamoyl phosphate synthetase (CPSase). CPSase catalyzes the formation of carbamoyl phosphate from the ammonia moiety of glutamine, carbonate, and phosphate donated by ATP, constituting the first step of 2 biosynthetic pathways, one leading to arginine and/or urea and the other to pyrimidine nucleotides. The large subunit (synthetase) binds the substrates ammonia (free or transferred from glutamine from the small subunit), hydrogencarbonate and ATP and carries out an ATP-coupled ligase reaction, activating hydrogencarbonate by forming carboxy phosphate which reacts with ammonia to form carbamoyl phosphate. This chain is Carbamoyl phosphate synthase large chain, found in Listeria innocua serovar 6a (strain ATCC BAA-680 / CLIP 11262).